We begin with the raw amino-acid sequence, 406 residues long: MQKKRIWTNARLATMAAGLPGLGIVEDGLIAAEGDRITFAGLASDFPYTEGPSTQGYEVTDCGGRWILPGLIDCHTHLVWAGSRADEFERRLAGASYEEIARSGGGIRSTVSAVRAASEAELVAESLPRLNALIGEGVTTIEIKSGYGLNIEDELKQLRAARALGEVRPIDVETTLLAAHTLPPEYEGRADAYIDLVCNEIIPAAAQAGLASAVDAFCETIGFTPEQTGRVLSAARHHGLAVKLHADQLSNLQGGALAARHNALSADHLEYLDEAGIAAMAQAGMVAVMLPGAYYVLRETHPPPLEGLRRAGVSLAISTDCNPGTSPLTSILLAMNMGATLFRMTVEECLLGTTRHAARALGLEKATGTLEAGKLCNLSIWDIDRPAELVNAMGLNPLHTRVWRGQ.

Residues His-75 and His-77 each coordinate Fe(3+). His-75 and His-77 together coordinate Zn(2+). 4-imidazolone-5-propanoate-binding residues include Arg-84, Tyr-147, and His-180. Tyr-147 contacts N-formimidoyl-L-glutamate. His-245 contacts Fe(3+). Residue His-245 coordinates Zn(2+). A 4-imidazolone-5-propanoate-binding site is contributed by Gln-248. Position 320 (Asp-320) interacts with Fe(3+). Asp-320 is a binding site for Zn(2+). 2 residues coordinate N-formimidoyl-L-glutamate: Asn-322 and Gly-324. Thr-325 serves as a coordination point for 4-imidazolone-5-propanoate.

It belongs to the metallo-dependent hydrolases superfamily. HutI family. The cofactor is Zn(2+). Fe(3+) is required as a cofactor.

The protein localises to the cytoplasm. It carries out the reaction 4-imidazolone-5-propanoate + H2O = N-formimidoyl-L-glutamate. The protein operates within amino-acid degradation; L-histidine degradation into L-glutamate; N-formimidoyl-L-glutamate from L-histidine: step 3/3. Catalyzes the hydrolytic cleavage of the carbon-nitrogen bond in imidazolone-5-propanoate to yield N-formimidoyl-L-glutamate. It is the third step in the universal histidine degradation pathway. This chain is Imidazolonepropionase, found in Hyphomonas neptunium (strain ATCC 15444).